Reading from the N-terminus, the 246-residue chain is Pyridoxine 5'-phosphate synthase (246 aa).

Asn-12 is a 3-amino-2-oxopropyl phosphate binding site. Asp-14–His-15 lines the 1-deoxy-D-xylulose 5-phosphate pocket. A 3-amino-2-oxopropyl phosphate-binding site is contributed by Arg-23. The active-site Proton acceptor is the His-48. 1-deoxy-D-xylulose 5-phosphate contacts are provided by Arg-50 and His-55. Glu-75 serves as the catalytic Proton acceptor. Thr-105 lines the 1-deoxy-D-xylulose 5-phosphate pocket. Catalysis depends on His-196, which acts as the Proton donor. 3-amino-2-oxopropyl phosphate is bound by residues Gly-197 and Gly-218–His-219.

The protein belongs to the PNP synthase family. Homooctamer; tetramer of dimers.

It is found in the cytoplasm. The catalysed reaction is 3-amino-2-oxopropyl phosphate + 1-deoxy-D-xylulose 5-phosphate = pyridoxine 5'-phosphate + phosphate + 2 H2O + H(+). The protein operates within cofactor biosynthesis; pyridoxine 5'-phosphate biosynthesis; pyridoxine 5'-phosphate from D-erythrose 4-phosphate: step 5/5. Catalyzes the complicated ring closure reaction between the two acyclic compounds 1-deoxy-D-xylulose-5-phosphate (DXP) and 3-amino-2-oxopropyl phosphate (1-amino-acetone-3-phosphate or AAP) to form pyridoxine 5'-phosphate (PNP) and inorganic phosphate. The sequence is that of Pyridoxine 5'-phosphate synthase from Thiobacillus denitrificans (strain ATCC 25259 / T1).